Consider the following 450-residue polypeptide: 23S rRNA (uracil(1939)-C(5))-methyltransferase RlmD (450 aa).

[4Fe-4S] cluster contacts are provided by Cys81, Cys87, Cys90, and Cys173. Residues Gln276, Phe305, Asn310, Glu326, Asp353, and Asp372 each contribute to the S-adenosyl-L-methionine site. Cys402 serves as the catalytic Nucleophile.

This sequence belongs to the class I-like SAM-binding methyltransferase superfamily. RNA M5U methyltransferase family. RlmD subfamily.

It carries out the reaction uridine(1939) in 23S rRNA + S-adenosyl-L-methionine = 5-methyluridine(1939) in 23S rRNA + S-adenosyl-L-homocysteine + H(+). Catalyzes the formation of 5-methyl-uridine at position 1939 (m5U1939) in 23S rRNA. This Idiomarina loihiensis (strain ATCC BAA-735 / DSM 15497 / L2-TR) protein is 23S rRNA (uracil(1939)-C(5))-methyltransferase RlmD.